Consider the following 689-residue polypeptide: Glycine--tRNA ligase beta subunit (689 aa).

The protein belongs to the class-II aminoacyl-tRNA synthetase family. Tetramer of two alpha and two beta subunits.

The protein resides in the cytoplasm. It carries out the reaction tRNA(Gly) + glycine + ATP = glycyl-tRNA(Gly) + AMP + diphosphate. This chain is Glycine--tRNA ligase beta subunit, found in Erwinia tasmaniensis (strain DSM 17950 / CFBP 7177 / CIP 109463 / NCPPB 4357 / Et1/99).